Here is a 413-residue protein sequence, read N- to C-terminus: Multidrug resistance protein MdtA (413 aa).

Residues 1-32 form the signal peptide; it reads MNAKRIRGLLIFAAVIAIAVLIWRHFTQTSPA. The segment covering 32–46 has biased composition (polar residues); it reads AAPGTSEQHAARTSH. Positions 32-59 are disordered; the sequence is AAPGTSEQHAARTSHSGNNSSGNGGGRR.

It belongs to the membrane fusion protein (MFP) (TC 8.A.1) family. Part of a tripartite efflux system composed of MdtA, MdtB and MdtC.

It localises to the cell inner membrane. The sequence is that of Multidrug resistance protein MdtA from Pectobacterium carotovorum subsp. carotovorum (strain PC1).